Reading from the N-terminus, the 212-residue chain is Ferric nitrobindin-like protein (212 aa).

The span at 1–11 shows a compositional bias: basic and acidic residues; the sequence is MTSSDQPERGS. The segment at 1-36 is disordered; sequence MTSSDQPERGSGDAAVQAAAERAEQTRGRNVPQFDD. Positions 64–70 match the GXWXGXG motif; the sequence is GVWRGDG.

It belongs to the nitrobindin family.

The protein is Ferric nitrobindin-like protein of Saccharopolyspora erythraea (strain ATCC 11635 / DSM 40517 / JCM 4748 / NBRC 13426 / NCIMB 8594 / NRRL 2338).